The sequence spans 181 residues: Oleosin (181 aa).

Positions 1 to 28 (TTTTYDRHFTTTQPHYRQDDRSRYDQQT) are disordered. Positions 1-38 (TTTTYDRHFTTTQPHYRQDDRSRYDQQTHSQSTSRTLA) are polar. Basic and acidic residues predominate over residues 16 to 26 (YRQDDRSRYDQ). 3 consecutive transmembrane segments (helical) span residues 38 to 58 (AIIA…LTFI), 69 to 89 (PLFV…GLAV), and 90 to 110 (TGFL…SYLF). The interval 39 to 110 (IIALLPVGGI…TGLSSLSYLF (72 aa)) is hydrophobic. Residues 155–181 (EMGDQGQVGVHAQVGGGKEGRKSGDRT) are disordered. Residues 158 to 167 (DQGQVGVHAQ) are compositionally biased toward low complexity. A compositionally biased stretch (basic and acidic residues) spans 172–181 (KEGRKSGDRT).

This sequence belongs to the oleosin family.

The protein localises to the lipid droplet. Its subcellular location is the membrane. In terms of biological role, may have a structural role to stabilize the lipid body during desiccation of the seed by preventing coalescence of the oil. Probably interacts with both lipid and phospholipid moieties of lipid bodies. May also provide recognition signals for specific lipase anchorage in lipolysis during seedling growth. This Helianthus annuus (Common sunflower) protein is Oleosin.